A 276-amino-acid chain; its full sequence is Ribosomal RNA small subunit methyltransferase A (276 aa).

Residues asparagine 27, leucine 29, glycine 54, glutamate 75, aspartate 101, and asparagine 122 each contribute to the S-adenosyl-L-methionine site.

This sequence belongs to the class I-like SAM-binding methyltransferase superfamily. rRNA adenine N(6)-methyltransferase family. RsmA subfamily.

It is found in the cytoplasm. The enzyme catalyses adenosine(1518)/adenosine(1519) in 16S rRNA + 4 S-adenosyl-L-methionine = N(6)-dimethyladenosine(1518)/N(6)-dimethyladenosine(1519) in 16S rRNA + 4 S-adenosyl-L-homocysteine + 4 H(+). Its function is as follows. Specifically dimethylates two adjacent adenosines (A1518 and A1519) in the loop of a conserved hairpin near the 3'-end of 16S rRNA in the 30S particle. May play a critical role in biogenesis of 30S subunits. In Brucella abortus biovar 1 (strain 9-941), this protein is Ribosomal RNA small subunit methyltransferase A.